A 329-amino-acid chain; its full sequence is Phenylalanine--tRNA ligase alpha subunit (329 aa).

Residue glutamate 254 participates in Mg(2+) binding.

This sequence belongs to the class-II aminoacyl-tRNA synthetase family. Phe-tRNA synthetase alpha subunit type 1 subfamily. As to quaternary structure, tetramer of two alpha and two beta subunits. Requires Mg(2+) as cofactor.

The protein localises to the cytoplasm. The catalysed reaction is tRNA(Phe) + L-phenylalanine + ATP = L-phenylalanyl-tRNA(Phe) + AMP + diphosphate + H(+). The sequence is that of Phenylalanine--tRNA ligase alpha subunit from Actinobacillus succinogenes (strain ATCC 55618 / DSM 22257 / CCUG 43843 / 130Z).